The chain runs to 357 residues: Membrane-bound lytic murein transglycosylase C (357 aa).

Residues 1–15 (MKKYLLLALLPFLYA) form the signal peptide. Cys16 carries N-palmitoyl cysteine lipidation. Cys16 carries the S-diacylglycerol cysteine lipid modification.

Belongs to the transglycosylase Slt family.

Its subcellular location is the cell outer membrane. The enzyme catalyses Exolytic cleavage of the (1-&gt;4)-beta-glycosidic linkage between N-acetylmuramic acid (MurNAc) and N-acetylglucosamine (GlcNAc) residues in peptidoglycan, from either the reducing or the non-reducing ends of the peptidoglycan chains, with concomitant formation of a 1,6-anhydrobond in the MurNAc residue.. Its function is as follows. Murein-degrading enzyme. May play a role in recycling of muropeptides during cell elongation and/or cell division. The sequence is that of Membrane-bound lytic murein transglycosylase C from Haemophilus influenzae (strain PittGG).